The following is a 973-amino-acid chain: Short transient receptor potential channel 5 (973 aa).

The Cytoplasmic portion of the chain corresponds to 1-325 (MAQLYYKKVN…YDGFPGWRRK (325 aa)). ANK repeat units lie at residues 30–60 (SAEE…IYYN), 69–97 (LGRS…VYVG), 98–124 (DALL…PSGE), and 141–170 (PDIT…TIPR). Zn(2+) contacts are provided by H172, C176, C178, and C181. An intramembrane region (discontinuously helical) is located at residues 326 to 360 (HWVVKLLTCMTIGFLFPMLSIAYLISPRSNLGLFI). At 361–363 (KKP) the chain is on the cytoplasmic side. The helical transmembrane segment at 364–384 (FIKFICHTASYLTFLFMLLLA) threads the bilayer. Residues 385–404 (SQHIVRTDLHVQGPPPTVVE) are Extracellular-facing. Residues 405–419 (WMILPWVLGFIWGEI) form a helical membrane-spanning segment. Residues E418, E421, N436, and D439 each coordinate Ca(2+). Over 420 to 433 (KEMWDGGFTEYIHD) the chain is Cytoplasmic. Residues 434–454 (WWNLMDFAMNSLYLATISLKI) traverse the membrane as a helical segment. The Extracellular portion of the chain corresponds to 455-476 (VAYVKYNGSRPREEWEMWHPTL). N461 carries an N-linked (GlcNAc...) asparagine glycan. A helical membrane pass occupies residues 477 to 497 (IAEALFAISNILSSLRLISLF). Residues 498-512 (TANSHLGPLQISLGR) lie on the Cytoplasmic side of the membrane. Residues 513–535 (MLLDILKFLFIYCLVLLAFANGL) form a helical membrane-spanning segment. The Extracellular portion of the chain corresponds to 536–603 (NQLYFYYETR…HEFTEFVGAT (68 aa)). Residues C553 and C558 are joined by a disulfide bond. A helical membrane pass occupies residues 604–624 (MFGTYNVISLVVLLNMLIAMM). The Cytoplasmic portion of the chain corresponds to 625-973 (NNSYQLIADH…GQEEQVTTRL (349 aa)). Disordered regions lie at residues 766-794 (HPRS…RAKS) and 810-837 (GPPL…KRSF). Residues 971–973 (TRL) form an essential for binding to NHERF1 PDZ domain region.

The protein belongs to the transient receptor (TC 1.A.4) family. STrpC subfamily. TRPC5 sub-subfamily. Homotetramer. Heterotetramer with TRPC1 and/or TRPC4. Each subunit in the homomeric ion channel (via ANK repeats) interacts with one copy of GTP-bound GNAI3; the interaction is direct and activates the ion channel. Interacts with TRPC4AP. Interacts with NHERF1. Interacts with MX1 and RNF24. Interacts (via C-terminus) with CABP1. Interacts with SESTD1 (via the spectrin 1 repeat). Interacts with PLSCR1. Interacts with PKD2L2. In terms of tissue distribution, expressed in brain with higher levels in fetal brain. Found in cerebellum and occipital pole.

Its subcellular location is the cell membrane. The enzyme catalyses Ca(2+)(in) = Ca(2+)(out). With respect to regulation, activated by G-protein coupled receptors via direct interaction with GTP-bound GNAI3, which increases the channel sensitivity to phosphatidylinositol bisphosphate. May be activated by intracellular calcium store depletion. Calcium channel activity is enhanced by MYLK, that promotes its subcellular localization at the plasma membrane. Its function is as follows. Forms a receptor-activated non-selective calcium permeant cation channel. Mediates calcium-dependent phosphatidylserine externalization and apoptosis in neurons via its association with PLSCR1. Acts on distinct neuronal populations in the hypothalamus to regulate innate behaviors including feeding, anxiety (flight/fight/fear), socialization, and maternal care. The chain is Short transient receptor potential channel 5 (TRPC5) from Homo sapiens (Human).